The primary structure comprises 360 residues: Cysteine proteinase 2 (360 aa).

Positions Met1–Ala19 are cleaved as a signal peptide. Positions Val20–Ala142 are cleaved as a propeptide — activation peptide. The N-linked (GlcNAc...) asparagine glycan is linked to Asn125. Disulfide bonds link Cys164/Cys207 and Cys198/Cys240. Cys167 is an active-site residue. The N-linked (GlcNAc...) asparagine glycan is linked to Asn256. The cysteines at positions 298 and 348 are disulfide-linked. Residues His307 and Asn327 contribute to the active site.

The protein belongs to the peptidase C1 family. As to expression, expressed at the onset of germination.

It is found in the vacuole. In terms of biological role, involved in the degradation of the storage protein zein. May play a role in proteolysis during emergencies. The sequence is that of Cysteine proteinase 2 (CCP2) from Zea mays (Maize).